The primary structure comprises 644 residues: Phosphatidylinositol polyphosphate 5-phosphatase type IV (644 aa).

A disordered region spans residues 1-193 (MPSKAENLRP…RLPSLLPPRP (193 aa)). Tandem repeats lie at residues 10 to 13 (PSEP), 15 to 18 (PQPP), 28 to 31 (PGAP), 39 to 42 (PPDA), 55 to 58 (PATP), 69 to 71 (PIA), 72 to 74 (PRP), and 75 to 78 (PARP). The 13 X 4 AA repeats of P-X-X-P stretch occupies residues 10 to 242 (PSEPAPQPPE…SLGPGRPRSP (233 aa)). Residues 78–90 (PRLERALSLDDKG) are compositionally biased toward basic and acidic residues. Position 99 is a phosphoserine (S99). Polar residues predominate over residues 107-118 (NGTSPSRGSVQS). Residues 121 to 124 (PGAP) form repeat 9. A compositionally biased stretch (low complexity) spans 152 to 163 (GSPSSGGNPLSG). Tandem repeats lie at residues 169–172 (PNLP), 183–185 (PRL), 190–193 (PPRP), and 236–239 (PGRP). 2 positions are modified to phosphoserine: S241 and S256. Position 641 is a cysteine methyl ester (C641). C641 carries the S-farnesyl cysteine lipid modification. Residues 642–644 (SVS) constitute a propeptide, removed in mature form.

Belongs to the inositol 1,4,5-trisphosphate 5-phosphatase type IV family. In terms of assembly, interacts (when prenylated) with PDE6D; this is important for normal location in cilia. Detected in brain, heart, pancreas, testis and spleen.

Its subcellular location is the cytoplasm. It localises to the cytoskeleton. It is found in the cilium axoneme. The protein resides in the golgi apparatus. The protein localises to the golgi stack membrane. Its subcellular location is the cell membrane. It localises to the cell projection. It is found in the ruffle. The protein resides in the nucleus. The enzyme catalyses a 1,2-diacyl-sn-glycero-3-phospho-(1D-myo-inositol-4,5-bisphosphate) + H2O = a 1,2-diacyl-sn-glycero-3-phospho-(1D-myo-inositol 4-phosphate) + phosphate. The catalysed reaction is a 1,2-diacyl-sn-glycero-3-phospho-(1D-myo-inositol-3,4,5-trisphosphate) + H2O = a 1,2-diacyl-sn-glycero-3-phospho-(1D-myo-inositol-3,4-bisphosphate) + phosphate. It catalyses the reaction a 1,2-diacyl-sn-glycero-3-phospho-(1D-myo-inositol-3,5-bisphosphate) + H2O = a 1,2-diacyl-sn-glycero-3-phospho-(1D-myo-inositol-3-phosphate) + phosphate. With respect to regulation, active in the presence of octyl-glucoside or Triton X-100, but completely inhibited by CTAB. Functionally, phosphatidylinositol (PtdIns) phosphatase that specifically hydrolyzes the 5-phosphate of phosphatidylinositol-3,4,5-trisphosphate (PtdIns(3,4,5)P3), phosphatidylinositol 4,5-bisphosphate (PtdIns(4,5)P2) and phosphatidylinositol 3,5-bisphosphate (PtdIns(3,5)P2). Specific for lipid substrates, inactive towards water soluble inositol phosphates. Plays an essential role in the primary cilium by controlling ciliary growth and phosphoinositide 3-kinase (PI3K) signaling and stability. This chain is Phosphatidylinositol polyphosphate 5-phosphatase type IV (INPP5E), found in Homo sapiens (Human).